Here is a 358-residue protein sequence, read N- to C-terminus: NADH-quinone oxidoreductase subunit H (358 aa).

The next 8 helical transmembrane spans lie at 20–40 (ITVGLVVSVIVKIVIILIPLI), 95–115 (ALFYIGPIMSLAPSFAAWAVI), 128–148 (IGLLYILMITSLSVYGVIIAG), 168–188 (ISYEIAMSAALVCVVMVSGSM), 206–226 (VFSWNWLPLFPIFIVYLISAV), 253–273 (GFAFALFFLAEYIFMILISAL), 290–310 (WGFIGTPSAFWMFVKMAAVLY), and 334–354 (VLIPIGFAYIVILGLWMISPL).

The protein belongs to the complex I subunit 1 family. NDH-1 is composed of 14 different subunits. Subunits NuoA, H, J, K, L, M, N constitute the membrane sector of the complex.

The protein resides in the cell inner membrane. It catalyses the reaction a quinone + NADH + 5 H(+)(in) = a quinol + NAD(+) + 4 H(+)(out). NDH-1 shuttles electrons from NADH, via FMN and iron-sulfur (Fe-S) centers, to quinones in the respiratory chain. The immediate electron acceptor for the enzyme in this species is believed to be ubiquinone. Couples the redox reaction to proton translocation (for every two electrons transferred, four hydrogen ions are translocated across the cytoplasmic membrane), and thus conserves the redox energy in a proton gradient. This subunit may bind ubiquinone. This is NADH-quinone oxidoreductase subunit H from Neisseria meningitidis serogroup A / serotype 4A (strain DSM 15465 / Z2491).